The chain runs to 255 residues: Imidazole glycerol phosphate synthase subunit HisF (255 aa).

Active-site residues include Asp-13 and Asp-132.

It belongs to the HisA/HisF family. In terms of assembly, heterodimer of HisH and HisF.

The protein localises to the cytoplasm. It catalyses the reaction 5-[(5-phospho-1-deoxy-D-ribulos-1-ylimino)methylamino]-1-(5-phospho-beta-D-ribosyl)imidazole-4-carboxamide + L-glutamine = D-erythro-1-(imidazol-4-yl)glycerol 3-phosphate + 5-amino-1-(5-phospho-beta-D-ribosyl)imidazole-4-carboxamide + L-glutamate + H(+). Its pathway is amino-acid biosynthesis; L-histidine biosynthesis; L-histidine from 5-phospho-alpha-D-ribose 1-diphosphate: step 5/9. IGPS catalyzes the conversion of PRFAR and glutamine to IGP, AICAR and glutamate. The HisF subunit catalyzes the cyclization activity that produces IGP and AICAR from PRFAR using the ammonia provided by the HisH subunit. The chain is Imidazole glycerol phosphate synthase subunit HisF from Leptospira biflexa serovar Patoc (strain Patoc 1 / ATCC 23582 / Paris).